A 310-amino-acid polypeptide reads, in one-letter code: Translocator protein BipD (310 aa).

2 coiled-coil regions span residues 127 to 171 and 250 to 299; these read DPIL…LQDY and DTAR…AIST.

This sequence belongs to the invasin protein D family.

It is found in the secreted. In terms of biological role, required for invasion of epithelial cells, as well as for survival within host cells, escape from endocytic vesicles and subsequent actin-tail formation. Probably regulates the secretion of effectors BipB and BipC and their final integration into the target cell membrane. The protein is Translocator protein BipD (bipD) of Burkholderia mallei (strain NCTC 10247).